A 271-amino-acid chain; its full sequence is MSRIAATFARLAGQGRKALIPYVTAGDPFADITVDLMHAMAKAGADVIELGVPFSDPMADGPVIQRASERALSRNISTADVLAMVARFRETDDTTPVVLMGYANPVERYGPDRFVDDARAAGVDGVLVVDYPPQECEAFADRLRAADLDPIFLLAPTSTDARMADVGRIATGYVYYVSLKGVTGSGNLDTDAVARMIPRIRSHVSVPVGVGFGIRDAATAVAVARVSDAVVIGSRIIQLIENEPRERVVPVAAGFIAEIRTALDTLQGTHA.

Residues glutamate 49 and aspartate 60 each act as proton acceptor in the active site.

The protein belongs to the TrpA family. In terms of assembly, tetramer of two alpha and two beta chains.

It catalyses the reaction (1S,2R)-1-C-(indol-3-yl)glycerol 3-phosphate + L-serine = D-glyceraldehyde 3-phosphate + L-tryptophan + H2O. It participates in amino-acid biosynthesis; L-tryptophan biosynthesis; L-tryptophan from chorismate: step 5/5. The alpha subunit is responsible for the aldol cleavage of indoleglycerol phosphate to indole and glyceraldehyde 3-phosphate. The polypeptide is Tryptophan synthase alpha chain (Leptothrix cholodnii (strain ATCC 51168 / LMG 8142 / SP-6) (Leptothrix discophora (strain SP-6))).